We begin with the raw amino-acid sequence, 221 residues long: Placenta growth factor (221 aa).

A signal peptide spans 1 to 18; that stretch reads MPVMRLFPCFLQLLAGLA. A glycan (N-linked (GlcNAc...) asparagine) is linked at Asn33. 3 cysteine pairs are disulfide-bonded: Cys52–Cys94, Cys83–Cys128, and Cys87–Cys130. N-linked (GlcNAc...) asparagine glycosylation is present at Asn101. The tract at residues 175–221 is disordered; that stretch reads QSAVWPSSPVPEEIPRMHPGRNGKKQQRKPLREKMKPERCGDAVPRR. The span at 192–203 shows a compositional bias: basic residues; sequence HPGRNGKKQQRK. Residues 193 to 213 form a heparin-binding region; sequence PGRNGKKQQRKPLREKMKPER. Positions 204–221 are enriched in basic and acidic residues; that stretch reads PLREKMKPERCGDAVPRR.

It belongs to the PDGF/VEGF growth factor family. In terms of assembly, antiparallel homodimer; disulfide-linked. Also found as heterodimer with VEGFA/VEGF. Isoform PlGF-3 is found both as homodimer and as monomer. N-glycosylated. As to expression, while the three isoforms are present in most placental tissues, PlGF-2 is specific to early (8 week) placenta and only PlGF-1 is found in the colon and mammary carcinomas.

Its subcellular location is the secreted. Functionally, growth factor active in angiogenesis and endothelial cell growth, stimulating their proliferation and migration. It binds to the receptor FLT1/VEGFR-1. Isoform PlGF-2 binds NRP1/neuropilin-1 and NRP2/neuropilin-2 in a heparin-dependent manner. Also promotes cell tumor growth. The protein is Placenta growth factor (PGF) of Homo sapiens (Human).